Reading from the N-terminus, the 328-residue chain is DNA-directed RNA polymerase subunit alpha 1 (328 aa).

The interval 1 to 234 (MQGFVKDFLK…GQLDEFVDER (234 aa)) is alpha N-terminal domain (alpha-NTD). The interval 248 to 328 (FDPILLRPVN…NWPPASLIED (81 aa)) is alpha C-terminal domain (alpha-CTD).

This sequence belongs to the RNA polymerase alpha chain family. As to quaternary structure, homodimer. The RNAP catalytic core consists of 2 alpha, 1 beta, 1 beta' and 1 omega subunit. When a sigma factor is associated with the core the holoenzyme is formed, which can initiate transcription.

It catalyses the reaction RNA(n) + a ribonucleoside 5'-triphosphate = RNA(n+1) + diphosphate. DNA-dependent RNA polymerase catalyzes the transcription of DNA into RNA using the four ribonucleoside triphosphates as substrates. This chain is DNA-directed RNA polymerase subunit alpha 1, found in Psychromonas ingrahamii (strain DSM 17664 / CCUG 51855 / 37).